Consider the following 287-residue polypeptide: Probable endonuclease 4 (287 aa).

Residues His-69, His-109, Glu-144, Asp-178, His-181, His-215, Asp-228, His-230, and Glu-260 each coordinate Zn(2+).

Belongs to the AP endonuclease 2 family. Zn(2+) is required as a cofactor.

It catalyses the reaction Endonucleolytic cleavage to 5'-phosphooligonucleotide end-products.. In terms of biological role, endonuclease IV plays a role in DNA repair. It cleaves phosphodiester bonds at apurinic or apyrimidinic (AP) sites, generating a 3'-hydroxyl group and a 5'-terminal sugar phosphate. The protein is Probable endonuclease 4 of Thermotoga maritima (strain ATCC 43589 / DSM 3109 / JCM 10099 / NBRC 100826 / MSB8).